A 319-amino-acid polypeptide reads, in one-letter code: ATP-dependent 6-phosphofructokinase (319 aa).

G11 serves as a coordination point for ATP. Residue 21–25 participates in ADP binding; that stretch reads RAVVR. ATP-binding positions include 72–73 and 102–105; these read RC and GDGS. D103 is a Mg(2+) binding site. 125 to 127 provides a ligand contact to substrate; the sequence is TID. D127 acts as the Proton acceptor in catalysis. R154 is an ADP binding site. Residues R162 and 169–171 each bind substrate; that span reads MGR. Residues 185–187, R211, and 213–215 contribute to the ADP site; these read GAE and KKH. Substrate is bound by residues E222, R243, and 249–252; that span reads HIQR.

It belongs to the phosphofructokinase type A (PFKA) family. ATP-dependent PFK group I subfamily. Prokaryotic clade 'B1' sub-subfamily. In terms of assembly, homotetramer. Component of a possible RNA degradosome complex composed of rny, rnjA, rnjB, pnp, pfkA and eno (although rnjA and rnjB's presence is unclear). Specifically interacts with RNase Y (rny, PubMed:21803996) and enolase (eno, PubMed:22198292). Interacts with BrxC. Requires Mg(2+) as cofactor.

It localises to the cytoplasm. It carries out the reaction beta-D-fructose 6-phosphate + ATP = beta-D-fructose 1,6-bisphosphate + ADP + H(+). It participates in carbohydrate degradation; glycolysis; D-glyceraldehyde 3-phosphate and glycerone phosphate from D-glucose: step 3/4. Its activity is regulated as follows. Allosterically activated by ADP and other diphosphonucleosides, and allosterically inhibited by phosphoenolpyruvate. Catalyzes the phosphorylation of D-fructose 6-phosphate to fructose 1,6-bisphosphate by ATP, the first committing step of glycolysis. The polypeptide is ATP-dependent 6-phosphofructokinase (Bacillus subtilis (strain 168)).